The following is an 88-amino-acid chain: U-scoloptoxin(XY)-Er1a (88 aa).

The signal sequence occupies residues methionine 1–serine 24. Residues arginine 66 to alanine 88 are disordered. The propeptide occupies glutamate 79–alanine 88.

The protein belongs to the scoloptoxin-XY family. In terms of processing, contains 3 disulfide bonds. Expressed by the venom gland.

It is found in the secreted. The sequence is that of U-scoloptoxin(XY)-Er1a from Ethmostigmus rubripes (Giant centipede).